The chain runs to 955 residues: 2-oxoglutarate dehydrogenase E1 component (955 aa).

The protein belongs to the alpha-ketoglutarate dehydrogenase family. Homodimer. Part of the 2-oxoglutarate dehydrogenase (OGDH) complex composed of E1 (2-oxoglutarate dehydrogenase), E2 (dihydrolipoamide succinyltransferase) and E3 (dihydrolipoamide dehydrogenase); the complex contains multiple copies of the three enzymatic components (E1, E2 and E3). It depends on thiamine diphosphate as a cofactor.

It carries out the reaction N(6)-[(R)-lipoyl]-L-lysyl-[protein] + 2-oxoglutarate + H(+) = N(6)-[(R)-S(8)-succinyldihydrolipoyl]-L-lysyl-[protein] + CO2. E1 component of the 2-oxoglutarate dehydrogenase (OGDH) complex which catalyzes the decarboxylation of 2-oxoglutarate, the first step in the conversion of 2-oxoglutarate to succinyl-CoA and CO(2). In Bacillus cereus (strain AH820), this protein is 2-oxoglutarate dehydrogenase E1 component.